A 341-amino-acid polypeptide reads, in one-letter code: Phenylalanine--tRNA ligase alpha subunit (341 aa).

Glu-256 contacts Mg(2+).

It belongs to the class-II aminoacyl-tRNA synthetase family. Phe-tRNA synthetase alpha subunit type 1 subfamily. Tetramer of two alpha and two beta subunits. Mg(2+) is required as a cofactor.

It localises to the cytoplasm. The enzyme catalyses tRNA(Phe) + L-phenylalanine + ATP = L-phenylalanyl-tRNA(Phe) + AMP + diphosphate + H(+). In Leptospira interrogans serogroup Icterohaemorrhagiae serovar Lai (strain 56601), this protein is Phenylalanine--tRNA ligase alpha subunit.